The chain runs to 1305 residues: Cyclin-G-associated kinase (1305 aa).

Ser2 carries the post-translational modification N-acetylserine. Ser2 and Ser16 each carry phosphoserine. One can recognise a Protein kinase domain in the interval 40–317 (LRVRRVLAEG…EVVRQLQEIA (278 aa)). Residues 46 to 54 (LAEGGFAFV) and Lys69 each bind ATP. The active-site Proton acceptor is the Asp173. In terms of domain architecture, Phosphatase tensin-type spans 397–564 (SVANYAKGDL…EYVCDMVAEE (168 aa)). Ser454 carries the post-translational modification Phosphoserine. The region spanning 570 to 708 (SKPMLVKSVV…FQVNLEVEVE (139 aa)) is the C2 tensin-type domain. Disordered regions lie at residues 707–732 (VEPRDRPSREAPPWENTSLRGLNPKI) and 747–854 (FGKP…AAGT). Ser768 is subject to Phosphoserine. Phosphothreonine is present on Thr774. Positions 776-789 (SDSPQSSSTDTNHF) are enriched in polar residues. Ser781 bears the Phosphoserine mark. Thr792 is subject to Phosphothreonine. Residues 805–816 (LDNTSPKESQSV) show a composition bias toward polar residues. Ser809, Ser824, and Ser827 each carry phosphoserine. Residues 822 to 832 (DGSEVSDEEEA) show a composition bias toward acidic residues. Residues 836 to 848 (SEERKPGAGEDTP) show a composition bias toward basic and acidic residues. Ser938 is modified (phosphoserine). Positions 1037-1139 (DTWADTATPG…WTPQAKPAPR (103 aa)) are disordered. The segment covering 1084–1099 (DLSDLSSSLQGLPAGL) has biased composition (low complexity). A compositionally biased stretch (polar residues) spans 1111–1132 (TQKSNSPWQANRPTAPGTSWTP). At Arg1122 the chain carries Omega-N-methylarginine. A Phosphoserine modification is found at Ser1171. The 65-residue stretch at 1241-1305 (SRWTPVSMAD…FENQGSRPLF (65 aa)) folds into the J domain.

This sequence belongs to the protein kinase superfamily. Ser/Thr protein kinase family.

The protein localises to the cytoplasm. The protein resides in the perinuclear region. Its subcellular location is the golgi apparatus. It is found in the trans-Golgi network. It localises to the cell junction. The protein localises to the focal adhesion. The protein resides in the cytoplasmic vesicle. Its subcellular location is the clathrin-coated vesicle. The enzyme catalyses L-seryl-[protein] + ATP = O-phospho-L-seryl-[protein] + ADP + H(+). It catalyses the reaction L-threonyl-[protein] + ATP = O-phospho-L-threonyl-[protein] + ADP + H(+). Its function is as follows. Associates with cyclin G and CDK5. Seems to act as an auxilin homolog that is involved in the uncoating of clathrin-coated vesicles by Hsc70 in non-neuronal cells. Expression oscillates slightly during the cell cycle, peaking at G1. May play a role in clathrin-mediated endocytosis and intracellular trafficking, and in the dynamics of clathrin assembly/disassembly. The chain is Cyclin-G-associated kinase from Mus musculus (Mouse).